Consider the following 86-residue polypeptide: Small ribosomal subunit protein bS16 (86 aa).

This sequence belongs to the bacterial ribosomal protein bS16 family.

The polypeptide is Small ribosomal subunit protein bS16 (Stenotrophomonas maltophilia (strain R551-3)).